A 506-amino-acid chain; its full sequence is Maturase K (506 aa).

The protein belongs to the intron maturase 2 family. MatK subfamily.

Its subcellular location is the plastid. The protein localises to the chloroplast. Functionally, usually encoded in the trnK tRNA gene intron. Probably assists in splicing its own and other chloroplast group II introns. This chain is Maturase K, found in Prunus persica (Peach).